The chain runs to 136 residues: MGLLSEFKAFAVKGNVVDMAVGIIIGAAFGKIVSSFVGDVIMPPIGLLIGGVDFSDLAITLKAEGDVPAVVLAYRKFIQTVLNFVIVAFAIFMGVKAINRLKREEAVAPSEPPVPSAEETLLTEIRDLLKAQQNKS.

Over 1–16 (MGLLSEFKAFAVKGNV) the chain is Cytoplasmic. Residues 17 to 45 (VDMAVGIIIGAAFGKIVSSFVGDVIMPPI) form a helical membrane-spanning segment. Topologically, residues 46 to 73 (GLLIGGVDFSDLAITLKAEGDVPAVVLA) are extracellular. The chain crosses the membrane as a helical span at residues 74-93 (YRKFIQTVLNFVIVAFAIFM). Residues 94–136 (GVKAINRLKREEAVAPSEPPVPSAEETLLTEIRDLLKAQQNKS) lie on the Cytoplasmic side of the membrane.

This sequence belongs to the MscL family. Homopentamer.

Its subcellular location is the cell inner membrane. In terms of biological role, channel that opens in response to stretch forces in the membrane lipid bilayer. Forms a nonselective ion channel with a conductance of about 4 nanosiemens. May participate in the regulation of osmotic pressure changes within the cell. This is Large-conductance mechanosensitive channel from Pseudomonas fluorescens.